A 401-amino-acid chain; its full sequence is 8-amino-7-oxononanoate synthase (401 aa).

Residue Arg-24 participates in substrate binding. Residue 111 to 112 (GF) participates in pyridoxal 5'-phosphate binding. His-137 is a binding site for substrate. Pyridoxal 5'-phosphate-binding residues include Ser-183, His-211, and Thr-240. Lys-243 carries the N6-(pyridoxal phosphate)lysine modification. Thr-357 contributes to the substrate binding site.

The protein belongs to the class-II pyridoxal-phosphate-dependent aminotransferase family. BioF subfamily. In terms of assembly, homodimer. Pyridoxal 5'-phosphate serves as cofactor.

It carries out the reaction 6-carboxyhexanoyl-[ACP] + L-alanine + H(+) = (8S)-8-amino-7-oxononanoate + holo-[ACP] + CO2. It functions in the pathway cofactor biosynthesis; biotin biosynthesis. In terms of biological role, catalyzes the decarboxylative condensation of pimeloyl-[acyl-carrier protein] and L-alanine to produce 8-amino-7-oxononanoate (AON), [acyl-carrier protein], and carbon dioxide. This Xylella fastidiosa (strain 9a5c) protein is 8-amino-7-oxononanoate synthase.